Consider the following 512-residue polypeptide: Phospho-2-dehydro-3-deoxyheptonate aldolase 2, chloroplastic (512 aa).

A chloroplast-targeting transit peptide spans 1–57 (MALTATATTRGGSALPNSCLQTPKFQSLQKPTFISSFPTNKKTKPRTKHISAVQSPP). Residues 37–57 (FPTNKKTKPRTKHISAVQSPP) form a disordered region. Cys126 contributes to the Mn(2+) binding site. Residues Arg165, 324–325 (ER), Lys347, and Arg378 each bind substrate. 3 residues coordinate Mn(2+): His410, Glu452, and Asp482.

Belongs to the class-II DAHP synthase family. As to quaternary structure, homodimer. Requires Mn(2+) as cofactor. As to expression, mostly expressed in leaves and stems, and, to a lower extent, in roots, stigmas, anthers, petal tubes, petal limbs and sepals.

It is found in the plastid. The protein resides in the chloroplast. The enzyme catalyses D-erythrose 4-phosphate + phosphoenolpyruvate + H2O = 7-phospho-2-dehydro-3-deoxy-D-arabino-heptonate + phosphate. It functions in the pathway metabolic intermediate biosynthesis; chorismate biosynthesis; chorismate from D-erythrose 4-phosphate and phosphoenolpyruvate: step 1/7. Involved in the production of volatile organic compounds (VOCs). Catalyzes an aldol-like condensation reaction between phosphoenolpyruvate (PEP) and D-erythrose 4-phosphate (E4P) to generate 3-deoxy-D-arabino-heptulosonate 7-phosphate (DAH7P) and inorganic phosphate. This Petunia hybrida (Petunia) protein is Phospho-2-dehydro-3-deoxyheptonate aldolase 2, chloroplastic.